The chain runs to 547 residues: Chaperonin GroEL (547 aa).

ATP-binding positions include 30-33 (TLGP), K51, 87-91 (DGTTT), G415, 479-481 (NAA), and D495. Residues 526–547 (KEEKSDLSVPPQGGMGGMGGMM) are disordered. Positions 538 to 547 (GGMGGMGGMM) are enriched in gly residues.

The protein belongs to the chaperonin (HSP60) family. As to quaternary structure, forms a cylinder of 14 subunits composed of two heptameric rings stacked back-to-back. Interacts with the co-chaperonin GroES.

It localises to the cytoplasm. It catalyses the reaction ATP + H2O + a folded polypeptide = ADP + phosphate + an unfolded polypeptide.. Its function is as follows. Together with its co-chaperonin GroES, plays an essential role in assisting protein folding. The GroEL-GroES system forms a nano-cage that allows encapsulation of the non-native substrate proteins and provides a physical environment optimized to promote and accelerate protein folding. The protein is Chaperonin GroEL of Buchnera aphidicola subsp. Tetraneura caerulescens.